The following is a 328-amino-acid chain: 4-hydroxythreonine-4-phosphate dehydrogenase (328 aa).

2 residues coordinate substrate: histidine 130 and threonine 131. A divalent metal cation-binding residues include histidine 163, histidine 208, and histidine 263. Residues lysine 271, asparagine 280, and arginine 289 each contribute to the substrate site.

Belongs to the PdxA family. In terms of assembly, homodimer. Zn(2+) is required as a cofactor. The cofactor is Mg(2+). Requires Co(2+) as cofactor.

The protein resides in the cytoplasm. The catalysed reaction is 4-(phosphooxy)-L-threonine + NAD(+) = 3-amino-2-oxopropyl phosphate + CO2 + NADH. The protein operates within cofactor biosynthesis; pyridoxine 5'-phosphate biosynthesis; pyridoxine 5'-phosphate from D-erythrose 4-phosphate: step 4/5. Its function is as follows. Catalyzes the NAD(P)-dependent oxidation of 4-(phosphooxy)-L-threonine (HTP) into 2-amino-3-oxo-4-(phosphooxy)butyric acid which spontaneously decarboxylates to form 3-amino-2-oxopropyl phosphate (AHAP). This chain is 4-hydroxythreonine-4-phosphate dehydrogenase, found in Burkholderia vietnamiensis (strain G4 / LMG 22486) (Burkholderia cepacia (strain R1808)).